We begin with the raw amino-acid sequence, 257 residues long: GTP cyclohydrolase FolE2 (257 aa).

The protein belongs to the GTP cyclohydrolase IV family.

The enzyme catalyses GTP + H2O = 7,8-dihydroneopterin 3'-triphosphate + formate + H(+). Its pathway is cofactor biosynthesis; 7,8-dihydroneopterin triphosphate biosynthesis; 7,8-dihydroneopterin triphosphate from GTP: step 1/1. Its function is as follows. Converts GTP to 7,8-dihydroneopterin triphosphate. The polypeptide is GTP cyclohydrolase FolE2 (Dictyoglomus thermophilum (strain ATCC 35947 / DSM 3960 / H-6-12)).